A 336-amino-acid polypeptide reads, in one-letter code: Fructose-1,6-bisphosphatase class 1 (336 aa).

Mg(2+) is bound by residues glutamate 98, aspartate 117, leucine 119, and aspartate 120. Residues 120-123 (DGSS), asparagine 210, and lysine 276 each bind substrate. Glutamate 282 contributes to the Mg(2+) binding site.

Belongs to the FBPase class 1 family. As to quaternary structure, homotetramer. Mg(2+) is required as a cofactor.

It is found in the cytoplasm. The enzyme catalyses beta-D-fructose 1,6-bisphosphate + H2O = beta-D-fructose 6-phosphate + phosphate. The protein operates within carbohydrate biosynthesis; gluconeogenesis. The chain is Fructose-1,6-bisphosphatase class 1 from Caulobacter vibrioides (strain ATCC 19089 / CIP 103742 / CB 15) (Caulobacter crescentus).